A 620-amino-acid chain; its full sequence is Chaperone protein HscA homolog (620 aa).

It belongs to the heat shock protein 70 family.

In terms of biological role, chaperone involved in the maturation of iron-sulfur cluster-containing proteins. Has a low intrinsic ATPase activity which is markedly stimulated by HscB. The protein is Chaperone protein HscA homolog of Shewanella putrefaciens (strain CN-32 / ATCC BAA-453).